The chain runs to 327 residues: MESSLAAIANSGPISIFSYCVSSILMTVTNKYVLSGFSFNMNFLLLAVQSIVCIVTIGSLKSFGVITYRQFNKEEARKWSPIAVLLVIMIYTSSKALQYLSIPVYTIFKNLTIILIAYGEVLWFGGKVTTMALSSFLLMVFSSVVAWYGDEAVSGSGNESFIALYLGYFWMATNCFASAAFVLIMRKRIKLTNFKDFDTMYYNNLLSIPILLASSIIFEDWSAENLAVNFPSDNRTATIAAMVLSGASSVGISYCSAWCVRVTSSTTYSMVGALNKLPIALSGLVFFPAAVNFWSVASIFVGFAAGLVYAVAKQRQQKENVSLPSSK.

Over 1–4 (MESS) the chain is Cytoplasmic. Residues 5–25 (LAAIANSGPISIFSYCVSSIL) form a helical membrane-spanning segment. Residues 26 to 36 (MTVTNKYVLSG) lie on the Lumenal side of the membrane. The chain crosses the membrane as a helical span at residues 37-57 (FSFNMNFLLLAVQSIVCIVTI). Residues 58–78 (GSLKSFGVITYRQFNKEEARK) are Cytoplasmic-facing. The chain crosses the membrane as a helical span at residues 79-93 (WSPIAVLLVIMIYTS). Topologically, residues 94–102 (SKALQYLSI) are lumenal. The helical transmembrane segment at 103–125 (PVYTIFKNLTIILIAYGEVLWFG) threads the bilayer. Residues 126–131 (GKVTTM) lie on the Cytoplasmic side of the membrane. Residues 132–149 (ALSSFLLMVFSSVVAWYG) traverse the membrane as a helical segment. Residues 150-163 (DEAVSGSGNESFIA) are Lumenal-facing. Asparagine 158 carries an N-linked (GlcNAc...) asparagine glycan. The chain crosses the membrane as a helical span at residues 164–184 (LYLGYFWMATNCFASAAFVLI). Residues 185–207 (MRKRIKLTNFKDFDTMYYNNLLS) are Cytoplasmic-facing. The helical transmembrane segment at 208 to 228 (IPILLASSIIFEDWSAENLAV) threads the bilayer. Residues 229 to 238 (NFPSDNRTAT) are Lumenal-facing. N-linked (GlcNAc...) asparagine glycosylation occurs at asparagine 234. A helical membrane pass occupies residues 239–259 (IAAMVLSGASSVGISYCSAWC). Residues 260 to 266 (VRVTSST) are Cytoplasmic-facing. The helical transmembrane segment at 267–289 (TYSMVGALNKLPIALSGLVFFPA) threads the bilayer. The Lumenal segment spans residues 290–292 (AVN). Residues 293-312 (FWSVASIFVGFAAGLVYAVA) form a helical membrane-spanning segment. The Cytoplasmic segment spans residues 313–327 (KQRQQKENVSLPSSK).

Belongs to the TPT transporter family. SLC35D subfamily. In terms of assembly, homooligomer.

It localises to the golgi apparatus membrane. The protein localises to the cytoplasmic vesicle membrane. Its subcellular location is the endoplasmic reticulum membrane. Involved in the import of GDP-mannose from the cytoplasm into the Golgi lumen. The polypeptide is GDP-mannose transporter (VRG4) (Scheffersomyces stipitis (strain ATCC 58785 / CBS 6054 / NBRC 10063 / NRRL Y-11545) (Yeast)).